Here is a 393-residue protein sequence, read N- to C-terminus: Chorismate synthase (393 aa).

R48 and R54 together coordinate NADP(+). FMN-binding positions include 125-127 (RSS), 238-239 (NA), G278, 293-297 (KPTSS), and R319. Positions 355–393 (ACTTPKIPGHTGPREGQEEGPSDSEPKVEFADDPEPDEA) are disordered.

This sequence belongs to the chorismate synthase family. As to quaternary structure, homotetramer. FMNH2 is required as a cofactor.

It catalyses the reaction 5-O-(1-carboxyvinyl)-3-phosphoshikimate = chorismate + phosphate. Its pathway is metabolic intermediate biosynthesis; chorismate biosynthesis; chorismate from D-erythrose 4-phosphate and phosphoenolpyruvate: step 7/7. Its function is as follows. Catalyzes the anti-1,4-elimination of the C-3 phosphate and the C-6 proR hydrogen from 5-enolpyruvylshikimate-3-phosphate (EPSP) to yield chorismate, which is the branch point compound that serves as the starting substrate for the three terminal pathways of aromatic amino acid biosynthesis. This reaction introduces a second double bond into the aromatic ring system. The sequence is that of Chorismate synthase from Nitrosospira multiformis (strain ATCC 25196 / NCIMB 11849 / C 71).